Reading from the N-terminus, the 352-residue chain is Sphingosine 1-phosphate receptor 2 (352 aa).

Residues 1-34 (MGGLYSEYLNPEKVQEHYNYTKETLDMQETPSRK) are Extracellular-facing. N-linked (GlcNAc...) asparagine glycosylation is present at Asn19. Residues 35-59 (VASAFIIILCCAIVVENLLVLIAVA) form a helical membrane-spanning segment. Over 60-66 (RNSKFHS) the chain is Cytoplasmic. Residues 67–95 (AMYLFLGNLAASDLLAGVAFVANTLLSGP) form a helical membrane-spanning segment. At 96–109 (VTLSLTPLQWFARE) the chain is on the extracellular side. The helical transmembrane segment at 110 to 128 (GSAFITLSASVFSLLAIAI) threads the bilayer. The Cytoplasmic portion of the chain corresponds to 129-147 (ERQVAIAKVKLYGSDKSCR). A helical membrane pass occupies residues 148-173 (MLMLIGASWLISLILGGLPILGWNCL). Topologically, residues 174 to 189 (DHLEACSTVLPLYAKH) are extracellular. The helical transmembrane segment at 190-210 (YVLCVVTIFSVILLAIVALYV) threads the bilayer. Over 211-233 (RIYFVVRSSHADVAGPQTLALLK) the chain is Cytoplasmic. A helical transmembrane segment spans residues 234-255 (TVTIVLGVFIICWLPAFSILLL). The Extracellular segment spans residues 256–271 (DSTCPVRACPVLYKAH). The helical transmembrane segment at 272-292 (YFFAFATLNSLLNPVIYTWRS) threads the bilayer. Residues 293–352 (RDLRREVLRPLLCWRQGKGATGRRGGNPGHRLLPLRSSSSLERGLHMPTSPTFLEGNTVV) lie on the Cytoplasmic side of the membrane. The S-palmitoyl cysteine moiety is linked to residue Cys305.

The protein belongs to the G-protein coupled receptor 1 family. In terms of tissue distribution, expressed in all developing tissues with highest levels detected in primitive, transformed cells. Relative abundance: lung &gt; kidney = skin = gut &gt; spleen &gt; brain &gt; liver.

Its subcellular location is the cell membrane. Receptor for the lysosphingolipid sphingosine 1-phosphate (S1P). S1P is a bioactive lysophospholipid that elicits diverse physiological effects on most types of cells and tissues. Receptor for the chemokine-like protein FAM19A5. Mediates the inhibitory effect of FAM19A5 on vascular smooth muscle cell proliferation and migration. In lymphoid follicles, couples the binding of S1P to the activation of GNA13 and downstream inhibition of AKT activation leading to suppression of germinal center (GC) B cell growth and migration outside the GC niche. The chain is Sphingosine 1-phosphate receptor 2 (S1pr2) from Rattus norvegicus (Rat).